A 277-amino-acid polypeptide reads, in one-letter code: Ribosome-inactivating protein luffin-alpha (277 aa).

Residues 1–19 (MKRFTVLILAIFVAASTVE) form the signal peptide. The active site involves E179.

Belongs to the ribosome-inactivating protein family. Type 1 RIP subfamily.

The enzyme catalyses Endohydrolysis of the N-glycosidic bond at one specific adenosine on the 28S rRNA.. This chain is Ribosome-inactivating protein luffin-alpha, found in Luffa aegyptiaca (Sponge gourd).